The sequence spans 421 residues: 4-hydroxy-3-methylbut-2-en-1-yl diphosphate synthase (flavodoxin) (421 aa).

[4Fe-4S] cluster contacts are provided by Cys-311, Cys-314, Cys-357, and Glu-364.

The protein belongs to the IspG family. [4Fe-4S] cluster serves as cofactor.

It catalyses the reaction (2E)-4-hydroxy-3-methylbut-2-enyl diphosphate + oxidized [flavodoxin] + H2O + 2 H(+) = 2-C-methyl-D-erythritol 2,4-cyclic diphosphate + reduced [flavodoxin]. Its pathway is isoprenoid biosynthesis; isopentenyl diphosphate biosynthesis via DXP pathway; isopentenyl diphosphate from 1-deoxy-D-xylulose 5-phosphate: step 5/6. Its function is as follows. Converts 2C-methyl-D-erythritol 2,4-cyclodiphosphate (ME-2,4cPP) into 1-hydroxy-2-methyl-2-(E)-butenyl 4-diphosphate. In Xanthomonas euvesicatoria pv. vesicatoria (strain 85-10) (Xanthomonas campestris pv. vesicatoria), this protein is 4-hydroxy-3-methylbut-2-en-1-yl diphosphate synthase (flavodoxin).